A 324-amino-acid polypeptide reads, in one-letter code: Probable nicotianamine synthase 4 (324 aa).

The protein belongs to the nicotianamine synthase (NAS)-like family.

It catalyses the reaction 3 S-adenosyl-L-methionine = nicotianamine + 3 S-methyl-5'-thioadenosine + 3 H(+). Functionally, synthesizes nicotianamine, a polyamine which serves as a sensor for the physiological iron status within the plant, and/or might be involved in the transport of iron. The sequence is that of Probable nicotianamine synthase 4 (NAS4) from Arabidopsis thaliana (Mouse-ear cress).